The sequence spans 30 residues: GRADYNFGYGLGRGTRKFFNGIGRWVRKTF.

It is found in the secreted. Its function is as follows. Bacteriocin with activity against species of Lactobacillus, Lactococcus, Pediococcus, Leuconostoc and against B.subtilis and, to a lesser extent, against B.coagulans, B.cereus and species of Enterococcus, Listeria, Kocuria, Staphylococcus, Corynebacterium, Salmonella, Pseudomonas and Escherichia. The polypeptide is Bacteriocin plantaricin KL-1Y (Lactiplantibacillus plantarum (Lactobacillus plantarum)).